Reading from the N-terminus, the 334-residue chain is Heme A synthase (334 aa).

5 helical membrane passes run 6 to 26 (ITRWLFISCIMVILMIIIGGI), 93 to 113 (GRITTLIYIVPLICFYFQGVI), 119 to 139 (LPYIIALLLFCIQGFMGWYMV), 154 to 174 (LAFHLIIAVIIYHILFYQLIK), and 189 to 209 (LIFSCISITVIYIQIFLGALV). Position 253 (histidine 253) interacts with heme. The next 3 membrane-spanning stretches (helical) occupy residues 255 to 275 (LGGFSVFAVNAILVICLFKVK), 282 to 302 (IAYFLIIVLLIQIATGIITIV), and 305 to 325 (VPIIIASIHQFVAIILLSIII). Residue histidine 313 participates in heme binding.

Belongs to the COX15/CtaA family. Type 2 subfamily. As to quaternary structure, interacts with CtaB. Heme b is required as a cofactor.

The protein localises to the cell membrane. The enzyme catalyses Fe(II)-heme o + 2 A + H2O = Fe(II)-heme a + 2 AH2. It functions in the pathway porphyrin-containing compound metabolism; heme A biosynthesis; heme A from heme O: step 1/1. Functionally, catalyzes the conversion of heme O to heme A by two successive hydroxylations of the methyl group at C8. The first hydroxylation forms heme I, the second hydroxylation results in an unstable dihydroxymethyl group, which spontaneously dehydrates, resulting in the formyl group of heme A. In Rickettsia prowazekii (strain Madrid E), this protein is Heme A synthase.